Here is a 653-residue protein sequence, read N- to C-terminus: Chaperone protein DnaK (653 aa).

At T200 the chain carries Phosphothreonine; by autocatalysis. A disordered region spans residues 615 to 653 (AEAAAAGAAGAGGAGASAGGASQQQDDVVDAEFKEVKKD). The span at 623–632 (AGAGGAGASA) shows a compositional bias: gly residues.

This sequence belongs to the heat shock protein 70 family.

In terms of biological role, acts as a chaperone. The sequence is that of Chaperone protein DnaK from Paraburkholderia xenovorans (strain LB400).